The chain runs to 315 residues: Aspartate carbamoyltransferase catalytic subunit (315 aa).

Positions 61 and 62 each coordinate carbamoyl phosphate. Residue lysine 90 participates in L-aspartate binding. Residues arginine 111, histidine 139, and glutamine 142 each coordinate carbamoyl phosphate. L-aspartate-binding residues include arginine 172 and arginine 234. Carbamoyl phosphate is bound by residues leucine 274 and proline 275.

Belongs to the aspartate/ornithine carbamoyltransferase superfamily. ATCase family. As to quaternary structure, heterooligomer of catalytic and regulatory chains.

The catalysed reaction is carbamoyl phosphate + L-aspartate = N-carbamoyl-L-aspartate + phosphate + H(+). It participates in pyrimidine metabolism; UMP biosynthesis via de novo pathway; (S)-dihydroorotate from bicarbonate: step 2/3. Functionally, catalyzes the condensation of carbamoyl phosphate and aspartate to form carbamoyl aspartate and inorganic phosphate, the committed step in the de novo pyrimidine nucleotide biosynthesis pathway. The protein is Aspartate carbamoyltransferase catalytic subunit of Hyperthermus butylicus (strain DSM 5456 / JCM 9403 / PLM1-5).